The following is an 882-amino-acid chain: Translation initiation factor IF-2 (882 aa).

The interval 28–294 (GIRKSADDSV…SSLQQGFQKP (267 aa)) is disordered. A compositionally biased stretch (polar residues) spans 67-81 (STLNIPGTGGKSKSV). Residues 92 to 209 (VKRDPQEAER…RMAEENKWTD (118 aa)) are compositionally biased toward basic and acidic residues. The span at 244 to 258 (GRGRNAKAARPKKGN) shows a compositional bias: basic residues. Positions 259–272 (KHAESKADREEARA) are enriched in basic and acidic residues. The tr-type G domain maps to 381 to 550 (PRAPVVTIMG…LLQAEVLELK (170 aa)). The tract at residues 390-397 (GHVDHGKT) is G1. 390–397 (GHVDHGKT) lines the GTP pocket. The interval 415 to 419 (GITQH) is G2. Positions 436 to 439 (DTPG) are G3. GTP-binding positions include 436–440 (DTPGH) and 490–493 (NKID). A G4 region spans residues 490-493 (NKID). Positions 526 to 528 (SAK) are G5. K800 is modified (N6-acetyllysine).

It belongs to the TRAFAC class translation factor GTPase superfamily. Classic translation factor GTPase family. IF-2 subfamily.

Its subcellular location is the cytoplasm. In terms of biological role, one of the essential components for the initiation of protein synthesis. Protects formylmethionyl-tRNA from spontaneous hydrolysis and promotes its binding to the 30S ribosomal subunits. Also involved in the hydrolysis of GTP during the formation of the 70S ribosomal complex. The sequence is that of Translation initiation factor IF-2 from Shigella flexneri serotype 5b (strain 8401).